The chain runs to 303 residues: Di/tripeptide transport system permease protein DppC (303 aa).

7 helical membrane-spanning segments follow: residues 33 to 53, 103 to 123, 131 to 151, 152 to 172, 202 to 222, 225 to 245, and 267 to 287; these read ALGG…APWV, LLIG…LGLL, AGPL…LLLA, VAIV…IAIV, AGTL…PLIV, TLSF…GLGV, and WWVV…INLM. The ABC transmembrane type-1 domain maps to 99–288; the sequence is ARLSLLIGLS…LSVLAINLMG (190 aa).

It belongs to the binding-protein-dependent transport system permease family. OppBC subfamily. The complex is composed of two ATP-binding proteins (DppD and DppF), two transmembrane proteins (DppB and DppC) and a solute-binding protein (DppA1-A5). Five orthologous SBPs (DppA1-A5) are present in P.aeruginosa, which increases the substrate specificity of the DppBCDF transporter.

Its subcellular location is the cell inner membrane. Part of the ABC transporter DppABCDF involved in the uptake of various di/tripeptides. Is also involved in the uptake of phaseolotoxin, a toxic tripeptide inhibiting the enzyme ornithine carbamoyltransferase. Responsible for the translocation of the substrate across the membrane. In Pseudomonas aeruginosa (strain UCBPP-PA14), this protein is Di/tripeptide transport system permease protein DppC.